The primary structure comprises 423 residues: MSASAVFILDVKGKPLISRNYKGDVAMSKIEHFMPLLVQREEEGALAPLLSHGQVHFLWIKHSNLYLVATTSKNANASLVYSFLYKTIEVFCEYFKELEEESIRDNFVIVYELLDELMDFGFPQTTDSKILQEYITQQSNKLETGKSRVPPTVTNAVSWRSEGIKYKKNEVFIDVIESVNLLVNANGSVLLSEIVGTIKLKVFLSGMPELRLGLNDRVLFELTGRSKNKSVELEDVKFHQCVRLSRFDNDRTISFIPPDGDFELMSYRLSTQVKPLIWIESVIEKFSHSRVEIMVKAKGQFKKQSVANGVEISVPVPSDADSPRFKTSVGSAKYVPERNVVIWSIKSFPGGKEYLMRAHFGLPSVEKEEVEGRPPIGVKFEIPYFTVSGIQVRYMKIIEKSGYQALPWVRYITQSGDYQLRTS.

Positions 168-421 constitute an MHD domain; sequence KNEVFIDVIE…ITQSGDYQLR (254 aa).

This sequence belongs to the adaptor complexes medium subunit family. As to quaternary structure, adaptor protein complex 1 (AP-1) is a heterotetramer composed of two large adaptins (gamma-type subunit AP1G1 and beta-type subunit AP1B1), a medium adaptin (mu-type subunit AP1M1 or AP1M2) and a small adaptin (sigma-type subunit AP1S1 or AP1S2 or AP1S3). Interacts with P2X4. Phosphorylation of membrane-bound AP1M1/AP1M2 increases its affinity for sorting signals.

It is found in the golgi apparatus. Its subcellular location is the cytoplasmic vesicle. The protein localises to the clathrin-coated vesicle membrane. Subunit of clathrin-associated adaptor protein complex 1 that plays a role in protein sorting in the trans-Golgi network (TGN) and endosomes. The AP complexes mediate the recruitment of clathrin to membranes and the recognition of sorting signals within the cytosolic tails of transmembrane cargo molecules. The sequence is that of AP-1 complex subunit mu-2 (AP1M2) from Homo sapiens (Human).